Reading from the N-terminus, the 393-residue chain is Probable acetyl-CoA acyltransferase (393 aa).

Cys-88 functions as the Acyl-thioester intermediate in the catalytic mechanism. Residues His-349 and Cys-378 each act as proton acceptor in the active site.

The protein belongs to the thiolase-like superfamily. Thiolase family.

It localises to the cytoplasm. It carries out the reaction 2 acetyl-CoA = acetoacetyl-CoA + CoA. This Staphylococcus aureus (strain Mu50 / ATCC 700699) protein is Probable acetyl-CoA acyltransferase.